A 118-amino-acid chain; its full sequence is Protein yippee-like 1 (118 aa).

The 98-residue stretch at 19–116 (RTYSCIHCRA…IELAHMIKDN (98 aa)) folds into the Yippee domain. Zn(2+) contacts are provided by cysteine 23, cysteine 26, cysteine 79, and cysteine 82. Positions 99-104 (KYKEGK) match the Nuclear localization signal motif.

This sequence belongs to the yippee family.

Its subcellular location is the nucleus. In terms of biological role, may play a role in epithelioid conversion of fibroblasts. The protein is Protein yippee-like 1 (Ypel1) of Mus musculus (Mouse).